Here is an 84-residue protein sequence, read N- to C-terminus: Acyl carrier protein homolog (84 aa).

Positions 4-79 (RDILLKIKEI…ELIAEVKHLI (76 aa)) constitute a Carrier domain. The residue at position 39 (S39) is an O-(pantetheine 4'-phosphoryl)serine.

In terms of processing, 4'-phosphopantetheine is transferred from CoA to a specific serine of the apo-ACP-like protein.

It participates in lipid metabolism; fatty acid biosynthesis. Functionally, carrier of the growing fatty acid chain in fatty acid biosynthesis. This is Acyl carrier protein homolog from Mycoplasma pneumoniae (strain ATCC 29342 / M129 / Subtype 1) (Mycoplasmoides pneumoniae).